The chain runs to 292 residues: Mycothiol acetyltransferase (292 aa).

N-acetyltransferase domains lie at 13–168 (ALDR…KWLQ) and 159–292 (KSVA…VYEK). Glu40 contacts 1D-myo-inositol 2-(L-cysteinylamino)-2-deoxy-alpha-D-glucopyranoside. Position 77-79 (77-79 (LAV)) interacts with acetyl-CoA. 1D-myo-inositol 2-(L-cysteinylamino)-2-deoxy-alpha-D-glucopyranoside-binding residues include Glu179, Lys218, and Glu226. Acetyl-CoA-binding positions include 230-232 (VGL) and 237-243 (RGRGLGD). Residue Tyr264 coordinates 1D-myo-inositol 2-(L-cysteinylamino)-2-deoxy-alpha-D-glucopyranoside.

This sequence belongs to the acetyltransferase family. MshD subfamily. As to quaternary structure, monomer.

It carries out the reaction 1D-myo-inositol 2-(L-cysteinylamino)-2-deoxy-alpha-D-glucopyranoside + acetyl-CoA = mycothiol + CoA + H(+). In terms of biological role, catalyzes the transfer of acetyl from acetyl-CoA to desacetylmycothiol (Cys-GlcN-Ins) to form mycothiol. The protein is Mycothiol acetyltransferase of Corynebacterium glutamicum (strain R).